The chain runs to 178 residues: Ribosome maturation factor RimM (178 aa).

The region spanning 101–178 is the PRC barrel domain; the sequence is DGEYYWYQLQ…EMKVEWDADF (78 aa).

Belongs to the RimM family. As to quaternary structure, binds ribosomal protein uS19.

The protein localises to the cytoplasm. Functionally, an accessory protein needed during the final step in the assembly of 30S ribosomal subunit, possibly for assembly of the head region. Essential for efficient processing of 16S rRNA. May be needed both before and after RbfA during the maturation of 16S rRNA. It has affinity for free ribosomal 30S subunits but not for 70S ribosomes. The chain is Ribosome maturation factor RimM from Pseudomonas fluorescens (strain ATCC BAA-477 / NRRL B-23932 / Pf-5).